The sequence spans 904 residues: Disintegrin and metalloproteinase domain-containing protein 22 (904 aa).

The first 23 residues, 1 to 23, serve as a signal peptide directing secretion; that stretch reads MQAAAAASFWLLCVLGTCPLARC. The propeptide occupies 24 to 223; sequence GRAGVASLKG…LKPRLKRRKR (200 aa). Residues 24-734 are Extracellular-facing; that stretch reads GRAGVASLKG…LSGNGVAGTN (711 aa). N-linked (GlcNAc...) asparagine glycosylation is present at asparagine 163. The Peptidase M12B domain maps to 237–436; the sequence is KYIELMIVND…GGGACLFNKP (200 aa). Cystine bridges form between cysteine 347–cysteine 431, cysteine 390–cysteine 415, cysteine 392–cysteine 399, cysteine 445–cysteine 475, cysteine 456–cysteine 472, cysteine 458–cysteine 464, cysteine 471–cysteine 492, cysteine 483–cysteine 489, cysteine 488–cysteine 514, cysteine 501–cysteine 521, cysteine 508–cysteine 540, cysteine 533–cysteine 545, cysteine 552–cysteine 603, cysteine 567–cysteine 633, cysteine 581–cysteine 591, cysteine 598–cysteine 661, and cysteine 655–cysteine 666. Residues 442–529 enclose the Disintegrin domain; sequence PPECGNGFIE…QCAPNVHKMD (88 aa). The N-linked (GlcNAc...) asparagine glycan is linked to asparagine 517. A glycan (N-linked (GlcNAc...) asparagine) is linked at asparagine 632. An N-linked (GlcNAc...) asparagine glycan is attached at asparagine 673. Positions 673 to 710 constitute an EGF-like domain; sequence NFSTCSSSKAGTVCSGNGVCSNELKCVCNRHWTGADCG. 3 disulfide bridges follow: cysteine 677–cysteine 692, cysteine 686–cysteine 698, and cysteine 700–cysteine 709. Residues 735 to 755 form a helical membrane-spanning segment; the sequence is IIIGIIAGTILVLALILGITA. The Cytoplasmic portion of the chain corresponds to 756–857; the sequence is WGYKNYREQR…RFRPRSNSTE (102 aa). The tract at residues 769–904 is disordered; that stretch reads QGDYVKKPGD…QSARLWETSI (136 aa). A compositionally biased stretch (low complexity) spans 789 to 808; it reads GGSTNSASSSKKRSNGLSHS. Phosphoserine occurs at positions 808, 817, and 832. Residues 809–827 show a composition bias toward basic and acidic residues; sequence WSERIPDTKHISDICENGR. The span at 840–851 shows a compositional bias: basic residues; the sequence is NKKKIRGKRFRP. Phosphoserine is present on residues serine 855, serine 860, serine 864, serine 868, and methionine 882. The segment covering 860 to 875 has biased composition (low complexity); the sequence is SPAKSPSSSTGSIASS.

As to quaternary structure, interacts with LGI1. Can bind to LGI4. Interacts with KCNA2, DLG2 and DLG4. Interacts with ADAM11. Interacts (via C-terminus) with YWHAB/14-3-3 beta. Interacts (via C-terminus) with YWHAZ/14-3-3 zeta. In terms of processing, the precursor is cleaved by a furin endopeptidase. In terms of tissue distribution, detected in juxtaparanodal zones in the central nervous system and at nerve terminal plexuses of basket cells in the cerebellum (at protein level). Expressed at high levels in the brain. Strongly expressed in cerebellar granule cells and hippocampus. In spinal cord, expression is restricted to gray matter.

The protein localises to the cell membrane. The protein resides in the cell projection. It is found in the axon. Functionally, probable ligand for integrin in the brain. This is a non catalytic metalloprotease-like protein. Involved in regulation of cell adhesion and spreading and in inhibition of cell proliferation. Neuronal receptor for LGI1. This is Disintegrin and metalloproteinase domain-containing protein 22 (Adam22) from Mus musculus (Mouse).